Consider the following 688-residue polypeptide: ATP-dependent RNA helicase ded1 (688 aa).

2 stretches are compositionally biased toward polar residues: residues 1-15 and 55-67; these read MADQ…LSID and GLNN…NNNY. Residues 1-170 form a disordered region; it reads MADQLSSGMG…TPDDPSKQHT (170 aa). Residues 88 to 102 show a composition bias toward gly residues; the sequence is GFEGQQGAGWGGPRP. Residues 103-114 show a composition bias toward low complexity; the sequence is QGGFNPNAYRGN. Gly residues predominate over residues 115 to 129; it reads AGAGAGAGAGGGGGS. The Q motif motif lies at 194–222; sequence LTFSNPPLDNHLISNIQLARYNVPTPVQK. Residues 225–416 enclose the Helicase ATP-binding domain; the sequence is IPIVMGGRDL…RDFLKDYIFL (192 aa). 238-245 is a binding site for ATP; it reads AQTGSGKT. A DEAD box motif is present at residues 360 to 363; sequence DEAD. In terms of domain architecture, Helicase C-terminal spans 427–587; that stretch reads NITQKVEYVE…EVPAFLETIA (161 aa). The disordered stretch occupies residues 590-615; that stretch reads SSFGGGRGGRGGGRGGGRGRTQTADY. The span at 592–608 shows a compositional bias: gly residues; it reads FGGGRGGRGGGRGGGRG.

This sequence belongs to the DEAD box helicase family. DDX3/DED1 subfamily.

Its subcellular location is the cytoplasm. It carries out the reaction ATP + H2O = ADP + phosphate + H(+). Functionally, ATP-binding RNA helicase involved in translation initiation. Remodels RNA in response to ADP and ATP concentrations by facilitating disruption, but also formation of RNA duplexes. This is ATP-dependent RNA helicase ded1 (drh-9) from Neurospora crassa (strain ATCC 24698 / 74-OR23-1A / CBS 708.71 / DSM 1257 / FGSC 987).